Reading from the N-terminus, the 444-residue chain is Orexin receptor type 2 (444 aa).

The span at 1–10 (MSGTKLEDSP) shows a compositional bias: basic and acidic residues. The interval 1–30 (MSGTKLEDSPPCRNWSSAPELNETQEPFLN) is disordered. Residues 1-54 (MSGTKLEDSPPCRNWSSAPELNETQEPFLNPTDYDDEEFLRYLWREYLHPKEYE) lie on the Extracellular side of the membrane. N-linked (GlcNAc...) asparagine glycans are attached at residues N14 and N22. A compositionally biased stretch (polar residues) spans 14-27 (NWSSAPELNETQEP). The interval 33 to 49 (DYDDEEFLRYLWREYLH) is required for response to orexin-A. The chain crosses the membrane as a helical span at residues 55-75 (WVLIAGYIIVFVVALIGNVLV). The Cytoplasmic portion of the chain corresponds to 76–88 (CVAVWKNHHMRTV). A helical membrane pass occupies residues 89-110 (TNYFIVNLSLADVLVTITCLPA). At 111–127 (TLVVDITETWFFGQSLC) the chain is on the extracellular side. C127 and C210 are joined by a disulfide. The chain crosses the membrane as a helical span at residues 128–150 (KVIPYLQTVSVSVSVLTLSCIAL). The Cytoplasmic segment spans residues 151–170 (DRWYAICHPLMFKSTAKRAR). The helical transmembrane segment at 171–191 (NSIVIIWIVSCIIMIPQAIVM) threads the bilayer. The Extracellular portion of the chain corresponds to 192–222 (ECSTMLPGLANKTTLFTVCDERWGGEIYPKM). Residue N202 is glycosylated (N-linked (GlcNAc...) asparagine). The chain crosses the membrane as a helical span at residues 223 to 243 (YHICFFLVTYMAPLCLMVLAY). Over 244–304 (LQIFRKLWCR…QIRARRKTAR (61 aa)) the chain is Cytoplasmic. A helical membrane pass occupies residues 305–326 (MLMVVLLVFAICYLPISILNVL). Residues 327-342 (KRVFGMFTHTEDRETV) lie on the Extracellular side of the membrane. The helical transmembrane segment at 343–366 (YAWFTFSHWLVYANSAANPIIYNF) threads the bilayer. The Cytoplasmic segment spans residues 367 to 444 (LSGKFREEFK…ANGAGQLQNW (78 aa)).

This sequence belongs to the G-protein coupled receptor 1 family.

It localises to the cell membrane. Nonselective, high-affinity receptor for both orexin-A and orexin-B neuropeptides. Triggers an increase in cytoplasmic Ca(2+) levels in response to orexin-A binding. This is Orexin receptor type 2 (HCRTR2) from Sus scrofa (Pig).